A 526-amino-acid polypeptide reads, in one-letter code: MADDREKSTDQMKLWKEGRGSQRPDVLTTGAGVPIGDKLNAMTAGPRGPLLVQDVVFTDEMAHFDRERIPERVVHAKGAGAFGYFEVTHDITRYSKAKVFEHVGKTTPIVVRFSTVAGEAGSPDTVRDPRGFAVKFYTDEGNWDLTGNNTPTFFIRDTLLSPSFIHSQKRNPQTHLKDPDMVWDFWSLRPESLHQVSFLFSDRGIPDGYRHMNGYGSHTFKLVNAQGQPVYCKFHYKTNQGIKNIPVEEADRLAATDPDYSIRDLYNAIANGNFPSWTFYIQVMTFEQAENWKWNPFDLTKVWSHKEFPLIPVGRFVLNRNPVNYFAEVEQLAFDPSNMPPGIEPSPDKMLQGRLFSYPDTHRHRLGANYLQLPVNCPYRTRVANYQRDGPMCMHDNQGGAPNYYPNSFSAPDVQPRFLESKCKVSPDVARYNSADDDNVTQVRTFFTQVLNEAERERLCQNMAGHLKGAQLFIQKRMVQNLMAVHSDYGNRVQALLDKHNAEGKKNTVHVYSRGGASAVAAASKM.

Residues 1-22 are compositionally biased toward basic and acidic residues; the sequence is MADDREKSTDQMKLWKEGRGSQ. The disordered stretch occupies residues 1 to 29; the sequence is MADDREKSTDQMKLWKEGRGSQRPDVLTT. Catalysis depends on residues histidine 75 and asparagine 148. Residues histidine 194, serine 201, arginine 203, asparagine 213, lysine 237, tryptophan 303, histidine 305, and lysine 306 each contribute to the NADP(+) site. Tyrosine 358 contacts heme.

The protein belongs to the catalase family. In terms of assembly, homotetramer. Heme serves as cofactor. The cofactor is NADP(+).

It is found in the peroxisome matrix. It catalyses the reaction 2 H2O2 = O2 + 2 H2O. Functionally, catalyzes the degradation of hydrogen peroxide (H(2)O(2)) generated by peroxisomal oxidases to water and oxygen, thereby protecting cells from the toxic effects of hydrogen peroxide. The polypeptide is Catalase (cat) (Danio rerio (Zebrafish)).